The primary structure comprises 255 residues: Small ribosomal subunit protein eS1 (255 aa).

Residue alanine 2 is modified to N-acetylalanine; partial.

The protein belongs to the eukaryotic ribosomal protein eS1 family. In terms of assembly, component of the small ribosomal subunit. Mature ribosomes consist of a small (40S) and a large (60S) subunit. The 40S subunit contains about 33 different proteins and 1 molecule of RNA (18S). The 60S subunit contains about 49 different proteins and 3 molecules of RNA (25S, 5.8S and 5S).

The protein localises to the cytoplasm. The sequence is that of Small ribosomal subunit protein eS1 from Yarrowia lipolytica (strain CLIB 122 / E 150) (Yeast).